Consider the following 164-residue polypeptide: Peptidyl-prolyl cis-trans isomerase A (164 aa).

M1 bears the N-acetylmethionine mark. V2 carries the post-translational modification N-acetylvaline; in Peptidyl-prolyl cis-trans isomerase A, N-terminally processed. The 157-residue stretch at 7–163 folds into the PPIase cyclophilin-type domain; the sequence is FFDISADGEP…KKITISDCGQ (157 aa). The residue at position 28 (K28) is an N6-acetyllysine; alternate. A Glycyl lysine isopeptide (Lys-Gly) (interchain with G-Cter in SUMO2); alternate cross-link involves residue K28. K28 is covalently cross-linked (Glycyl lysine isopeptide (Lys-Gly) (interchain with G-Cter in ubiquitin); alternate). The residue at position 44 (K44) is an N6-acetyllysine. S77 bears the Phosphoserine mark. At K82 the chain carries N6-acetyllysine; alternate. K82 is covalently cross-linked (Glycyl lysine isopeptide (Lys-Gly) (interchain with G-Cter in SUMO2); alternate). T93 carries the phosphothreonine modification. The N-linked (GlcNAc...) asparagine glycan is linked to N108. K125, K131, and K133 each carry N6-acetyllysine.

Belongs to the cyclophilin-type PPIase family. PPIase A subfamily. As to quaternary structure, interacts with protein phosphatase PPP3CA/calcineurin A. Interacts with PRPF19 isoform 2 (via N-terminus). Interacts with isoform 2 of BSG/CD147. Interacts with FOXO1; the interaction promotes FOXO1 dephosphorylation, nuclear accumulation and transcriptional activity. Interacts with integrin ITGA2B:ITGB3; the interaction is ROS and peptidyl-prolyl cis-trans isomerase (PPIase) activity-dependent and is increased in the presence of thrombin. Interacts with MAP3K5. Interacts with TARDBP; the interaction is dependent on the RNA-binding activity of TARDBP and the PPIase activity of PPIA/CYPA and the acetylation of PPIA/CYPA at Lys-125 favors the interaction. Interacts with HNRNPA1, HNRNPA2B1, HNRNPC, RBMX, HNRNPK and HNRNPM. Post-translationally, acetylation at Lys-125 markedly inhibits catalysis of cis to trans isomerization. PPIA acetylation also antagonizes the immunosuppressive effects of cyclosporine by inhibiting the sequential steps of cyclosporine binding and calcineurin inhibition. Acetylation at Lys-125 favors the interaction with TARDBP.

The protein localises to the cytoplasm. It is found in the secreted. The protein resides in the nucleus. It catalyses the reaction [protein]-peptidylproline (omega=180) = [protein]-peptidylproline (omega=0). With respect to regulation, binds cyclosporin A (CsA). CsA mediates some of its effects via an inhibitory action on PPIase. In terms of biological role, catalyzes the cis-trans isomerization of proline imidic peptide bonds in oligopeptides. Exerts a strong chemotactic effect on leukocytes partly through activation of one of its membrane receptors BSG/CD147, initiating a signaling cascade that culminates in MAPK/ERK activation. Activates endothelial cells (ECs) in a proinflammatory manner by stimulating activation of NF-kappa-B and ERK, JNK and p38 MAP-kinases and by inducing expression of adhesion molecules including SELE and VCAM1. Induces apoptosis in ECs by promoting the FOXO1-dependent expression of CCL2 and BCL2L11 which are involved in EC chemotaxis and apoptosis. In response to oxidative stress, initiates proapoptotic and antiapoptotic signaling in ECs via activation of NF-kappa-B and AKT1 and up-regulation of antiapoptotic protein BCL2. Negatively regulates MAP3K5/ASK1 kinase activity, autophosphorylation and oxidative stress-induced apoptosis mediated by MAP3K5/ASK1. Necessary for the assembly of TARDBP in heterogeneous nuclear ribonucleoprotein (hnRNP) complexes and regulates TARDBP binding to RNA UG repeats and TARDBP-dependent expression of HDAC6, ATG7 and VCP which are involved in clearance of protein aggregates. Plays an important role in platelet activation and aggregation. Regulates calcium mobilization and integrin ITGA2B:ITGB3 bidirectional signaling via increased ROS production as well as by facilitating the interaction between integrin and the cell cytoskeleton. Binds heparan sulfate glycosaminoglycans. This Cricetulus griseus (Chinese hamster) protein is Peptidyl-prolyl cis-trans isomerase A (PPIA).